We begin with the raw amino-acid sequence, 160 residues long: Putative pre-16S rRNA nuclease (160 aa).

It belongs to the YqgF nuclease family.

The protein resides in the cytoplasm. In terms of biological role, could be a nuclease involved in processing of the 5'-end of pre-16S rRNA. The chain is Putative pre-16S rRNA nuclease from Rhodopseudomonas palustris (strain ATCC BAA-98 / CGA009).